Reading from the N-terminus, the 756-residue chain is Cartilage oligomeric matrix protein (756 aa).

Positions 1–20 (MVLAAARVLLLTLAALGASG) are cleaved as a signal peptide. A COMP N-terminal region spans residues 22 to 85 (GQMPLGGDLG…PARTPKLTVR (64 aa)). One can recognise an EGF-like 1 domain in the interval 86 to 125 (PLSQCSPGFCFPGVACTETANGARCGPCPEGFTGNGSHCA). Intrachain disulfides connect Cys90–Cys101, Cys95–Cys110, Cys113–Cys124, Cys130–Cys141, Cys135–Cys150, Cys183–Cys196, Cys190–Cys205, Cys228–Cys242, Cys236–Cys252, and Cys254–Cys265. N-linked (GlcNAc...) asparagine glycosylation occurs at Asn120. The EGF-like 2; calcium-binding domain maps to 126 to 178 (DVNECTAHPCFPRVRCINTSPGFRCEACPPGFSGPTHEGVGLAFAKANKQVCT). Residues 179 to 218 (DINECETGQHNCVPNSVCVNTVGSFQCGPCQPGFVGDQAS) enclose the EGF-like 3; calcium-binding domain. The EGF-like 4 domain maps to 224–266 (PQRFCPDGTPSPCHEKADCVLERDGSRSCVCAVGWAGNGLICG). 8 TSP type-3 repeats span residues 267–299 (RDTD…NSGQ), 300–335 (EDVD…NPDQ), 336–358 (RNTD…NDDQ), 359–394 (KDTD…NSDQ), 395–417 (KDTD…NADQ), 418–455 (RDVD…NSAQ), 456–491 (QDSD…NPGQ), and 492–527 (EDMD…EVTL). The disordered stretch occupies residues 322–502 (NEKDNCPLVR…DMDRDGVGDA (181 aa)). Composition is skewed to basic and acidic residues over residues 333–345 (PDQR…KWGD), 351–369 (RSQK…RGDA), and 415–425 (ADQRDVDHDFV). Positions 366–368 (RGD) match the Cell attachment site motif. Positions 466–475 (ACDDDDDNDG) are enriched in acidic residues. The segment at 526–756 (TLTDFRAFQT…DYEAQRLLQA (231 aa)) is mediates cell survival and induction of the IAP family of survival proteins. Residues 531-745 (RAFQTVVLDP…LRYRCNDTIP (215 aa)) enclose the TSP C-terminal domain. N-linked (GlcNAc...) asparagine glycosylation is present at Asn741.

Belongs to the thrombospondin family. As to quaternary structure, pentamer; disulfide-linked. Exists in a more compact conformation in the presence of calcium and shows a more extended conformation in the absence of calcium. Interacts with ITGB3, ITGA5 and FN1. Binding to FN1 requires the presence of divalent cations (Ca(2+), Mg(2+) or Mn(2+)). The greatest amount of binding is seen in the presence of Mn(2+). Interacts with MATN1, MATN3, MATN4 and ACAN. Binds heparin, heparan sulfate and chondroitin sulfate. EDTA dimishes significantly its binding to ACAN and abolishes its binding to MATN3, MATN4 and chondroitin sulfate. Interacts with collagen I, II and IX, and interaction with these collagens is dependent on the presence of zinc ions. Interacts with ADAMTS12. Interacts with ITGA7. Requires Ca(2+) as cofactor. Post-translationally, proteolytically cleaved by metalloproteases ADAMTS4 and ADAMTS1 with ADAMTS4 showing more potent activity.

The protein localises to the secreted. The protein resides in the extracellular space. It is found in the extracellular matrix. In terms of biological role, plays a role in the structural integrity of cartilage via its interaction with other extracellular matrix proteins such as the collagens and fibronectin. Can mediate the interaction of chondrocytes with the cartilage extracellular matrix through interaction with cell surface integrin receptors. Could play a role in the pathogenesis of osteoarthritis. Potent suppressor of apoptosis in both primary chondrocytes and transformed cells. Suppresses apoptosis by blocking the activation of caspase-3 and by inducing the IAP family of survival proteins (BIRC3, BIRC2, BIRC5 and XIAP). Essential for maintaining a vascular smooth muscle cells (VSMCs) contractile/differentiated phenotype under physiological and pathological stimuli. Maintains this phenotype of VSMCs by interacting with ITGA7. The polypeptide is Cartilage oligomeric matrix protein (COMP) (Bos taurus (Bovine)).